The following is a 425-amino-acid chain: Serine--tRNA ligase (425 aa).

232–234 is a binding site for L-serine; that stretch reads TSE. Residues 263–265 and Val-279 contribute to the ATP site; that span reads RRE. Glu-286 is a binding site for L-serine. An ATP-binding site is contributed by 350-353; the sequence is EAVS. Thr-387 contacts L-serine.

This sequence belongs to the class-II aminoacyl-tRNA synthetase family. Type-1 seryl-tRNA synthetase subfamily. As to quaternary structure, homodimer. The tRNA molecule binds across the dimer.

It localises to the cytoplasm. It catalyses the reaction tRNA(Ser) + L-serine + ATP = L-seryl-tRNA(Ser) + AMP + diphosphate + H(+). The catalysed reaction is tRNA(Sec) + L-serine + ATP = L-seryl-tRNA(Sec) + AMP + diphosphate + H(+). Its pathway is aminoacyl-tRNA biosynthesis; selenocysteinyl-tRNA(Sec) biosynthesis; L-seryl-tRNA(Sec) from L-serine and tRNA(Sec): step 1/1. Its function is as follows. Catalyzes the attachment of serine to tRNA(Ser). Is also able to aminoacylate tRNA(Sec) with serine, to form the misacylated tRNA L-seryl-tRNA(Sec), which will be further converted into selenocysteinyl-tRNA(Sec). The protein is Serine--tRNA ligase of Methanoculleus marisnigri (strain ATCC 35101 / DSM 1498 / JR1).